A 145-amino-acid polypeptide reads, in one-letter code: Ribosomal RNA large subunit methyltransferase H (145 aa).

S-adenosyl-L-methionine-binding positions include Leu-62, Gly-94, and 113–118; that span reads LGQLTL.

Belongs to the RNA methyltransferase RlmH family. As to quaternary structure, homodimer.

Its subcellular location is the cytoplasm. The enzyme catalyses pseudouridine(1915) in 23S rRNA + S-adenosyl-L-methionine = N(3)-methylpseudouridine(1915) in 23S rRNA + S-adenosyl-L-homocysteine + H(+). In terms of biological role, specifically methylates the pseudouridine at position 1915 (m3Psi1915) in 23S rRNA. This Deinococcus deserti (strain DSM 17065 / CIP 109153 / LMG 22923 / VCD115) protein is Ribosomal RNA large subunit methyltransferase H.